We begin with the raw amino-acid sequence, 158 residues long: NADH-quinone oxidoreductase subunit B 2 (158 aa).

The [4Fe-4S] cluster site is built by cysteine 37, cysteine 38, cysteine 102, and cysteine 132.

Belongs to the complex I 20 kDa subunit family. NDH-1 is composed of 14 different subunits. Subunits NuoB, C, D, E, F, and G constitute the peripheral sector of the complex. [4Fe-4S] cluster serves as cofactor.

Its subcellular location is the cell inner membrane. The catalysed reaction is a quinone + NADH + 5 H(+)(in) = a quinol + NAD(+) + 4 H(+)(out). Functionally, NDH-1 shuttles electrons from NADH, via FMN and iron-sulfur (Fe-S) centers, to quinones in the respiratory chain. Couples the redox reaction to proton translocation (for every two electrons transferred, four hydrogen ions are translocated across the cytoplasmic membrane), and thus conserves the redox energy in a proton gradient. This chain is NADH-quinone oxidoreductase subunit B 2, found in Acidithiobacillus ferrooxidans (strain ATCC 53993 / BNL-5-31) (Leptospirillum ferrooxidans (ATCC 53993)).